The sequence spans 400 residues: Exodeoxyribonuclease 7 large subunit (400 aa).

It belongs to the XseA family. As to quaternary structure, heterooligomer composed of large and small subunits.

It is found in the cytoplasm. The enzyme catalyses Exonucleolytic cleavage in either 5'- to 3'- or 3'- to 5'-direction to yield nucleoside 5'-phosphates.. Bidirectionally degrades single-stranded DNA into large acid-insoluble oligonucleotides, which are then degraded further into small acid-soluble oligonucleotides. The polypeptide is Exodeoxyribonuclease 7 large subunit (Clostridium kluyveri (strain NBRC 12016)).